Consider the following 416-residue polypeptide: Exodeoxyribonuclease 7 large subunit (416 aa).

A disordered region spans residues 1-21; that stretch reads MTEPDSKPKKGRAGRKKAEPV.

Belongs to the XseA family. Heterooligomer composed of large and small subunits.

Its subcellular location is the cytoplasm. It carries out the reaction Exonucleolytic cleavage in either 5'- to 3'- or 3'- to 5'-direction to yield nucleoside 5'-phosphates.. In terms of biological role, bidirectionally degrades single-stranded DNA into large acid-insoluble oligonucleotides, which are then degraded further into small acid-soluble oligonucleotides. This Deinococcus radiodurans (strain ATCC 13939 / DSM 20539 / JCM 16871 / CCUG 27074 / LMG 4051 / NBRC 15346 / NCIMB 9279 / VKM B-1422 / R1) protein is Exodeoxyribonuclease 7 large subunit.